Here is a 149-residue protein sequence, read N- to C-terminus: Antitoxin HigA1 (149 aa).

The 55-residue stretch at 42–96 (LIALRKHCQLSQVEVAKRMGVRQPTVSGFEKEPSDPKLSTLQRYARALDARLRLV) folds into the HTH cro/C1-type domain. A DNA-binding region (H-T-H motif) is located at residues 53-72 (QVEVAKRMGVRQPTVSGFEK).

As to quaternary structure, interacts with SecB-like chaperone MT2006.

Its function is as follows. Antitoxin component of an atypical, type II toxin-antitoxin chaperone (TAC) system. Probably neutralizes the toxic effects of cognate toxin HigB1, which also requires SecB-like chaperone MT2006 (AC Q7D7P7). Autorepresses its operon (higB1-higA1-MT2006). In Mycobacterium tuberculosis (strain CDC 1551 / Oshkosh), this protein is Antitoxin HigA1.